A 187-amino-acid polypeptide reads, in one-letter code: Elongation factor P (187 aa).

It belongs to the elongation factor P family.

The protein localises to the cytoplasm. The protein operates within protein biosynthesis; polypeptide chain elongation. Involved in peptide bond synthesis. Stimulates efficient translation and peptide-bond synthesis on native or reconstituted 70S ribosomes in vitro. Probably functions indirectly by altering the affinity of the ribosome for aminoacyl-tRNA, thus increasing their reactivity as acceptors for peptidyl transferase. The polypeptide is Elongation factor P (Synechococcus sp. (strain CC9311)).